Reading from the N-terminus, the 343-residue chain is Lumican (343 aa).

The N-terminal stretch at 1 to 18 (MTLNSLPIFLVLISGIFC) is a signal peptide. Position 19 is a pyrrolidone carboxylic acid (Gln19). Sulfotyrosine occurs at positions 20 and 22. An LRRNT domain is found at 31–69 (DPFGPSTAVCAPECNCPLSYPTAMYCDNLKLKTIPIVPS). 8 LRR repeats span residues 70–91 (GIKYLYLRNNMIESIEENTFDN), 94–117 (DLQWLILDHNHLENSKIKGRVFSK), 120–140 (NLKKLHINYNNLTEAVGPLPK), 141–162 (TLDDLQLSHNKITKVNPGALEG), 165–186 (NLTVIHLQNNQLKADSISGAFK), 190–211 (SLLYLDLSFNQLTKLPTGLPHS), 212–232 (LLMLYFDNNQISNIPDEYFQG), and 235–255 (TLQYLRLSHNKLTDSGIPGNV). N-linked (GlcNAc...) (keratan sulfate) asparagine glycosylation occurs at Asn91. N-linked (GlcNAc...) (keratan sulfate) asparagine glycosylation occurs at Asn130. Asn165 carries an N-linked (GlcNAc...) (keratan sulfate) asparagine glycan. N-linked (GlcNAc...) (keratan sulfate) asparagine glycosylation is present at Asn257. LRR repeat units follow at residues 260-281 (SLVELDLSFNQLKSIPTVSENL), 282-301 (ENFYLQVNKINKFPLSSFCK), and 310-330 (KITHLRLDGNNLTRADLPQEM). Cys300 and Cys333 are oxidised to a cystine. Asn320 is a glycosylation site (N-linked (GlcNAc...) asparagine).

It belongs to the small leucine-rich proteoglycan (SLRP) family. SLRP class II subfamily. Binds to laminin. Contains keratan sulfate.

The protein localises to the secreted. The protein resides in the extracellular space. Its subcellular location is the extracellular matrix. In Coturnix japonica (Japanese quail), this protein is Lumican (LUM).